Consider the following 1028-residue polypeptide: Isoleucine--tRNA ligase (1028 aa).

The 'HIGH' region motif lies at 51–61; that stretch reads PTANGRPHIGH. The 'KMSKS' region motif lies at 591-595; that stretch reads KMSKS. Lys594 is a binding site for ATP.

This sequence belongs to the class-I aminoacyl-tRNA synthetase family. IleS type 2 subfamily. As to quaternary structure, monomer. Zn(2+) serves as cofactor.

It is found in the cytoplasm. The enzyme catalyses tRNA(Ile) + L-isoleucine + ATP = L-isoleucyl-tRNA(Ile) + AMP + diphosphate. Its function is as follows. Catalyzes the attachment of isoleucine to tRNA(Ile). As IleRS can inadvertently accommodate and process structurally similar amino acids such as valine, to avoid such errors it has two additional distinct tRNA(Ile)-dependent editing activities. One activity is designated as 'pretransfer' editing and involves the hydrolysis of activated Val-AMP. The other activity is designated 'posttransfer' editing and involves deacylation of mischarged Val-tRNA(Ile). The chain is Isoleucine--tRNA ligase from Thermoplasma volcanium (strain ATCC 51530 / DSM 4299 / JCM 9571 / NBRC 15438 / GSS1).